A 136-amino-acid polypeptide reads, in one-letter code: Histone H3.3C (136 aa).

Residues 1-42 (MARTKQTARKSTGGKAPRKQLVTKAAKKCAPATGGVKKPHRY) are disordered. An Asymmetric dimethylarginine; by PRMT6 modification is found at arginine 3. Position 4 is a phosphothreonine; by HASPIN (threonine 4). Position 5 is an allysine; alternate (lysine 5). Lysine 5 is modified (N6,N6,N6-trimethyllysine; alternate). Lysine 5 is modified (N6,N6-dimethyllysine; alternate). At lysine 5 the chain carries N6-(2-hydroxyisobutyryl)lysine; alternate. Lysine 5 is subject to N6-acetyllysine; alternate. Lysine 5 carries the post-translational modification N6-methyllysine; alternate. Glutamine 6 is modified (5-glutamyl dopamine; alternate). Glutamine 6 is subject to 5-glutamyl serotonin; alternate. Phosphothreonine; by PKC is present on threonine 7. Lysine 10 carries the post-translational modification N6-(2-hydroxyisobutyryl)lysine; alternate. Lysine 10 bears the N6-lactoyllysine; alternate mark. The residue at position 10 (lysine 10) is an N6-methylated lysine. At serine 11 the chain carries ADP-ribosylserine; alternate. Phosphoserine; alternate; by AURKB, AURKC, RPS6KA3, RPS6KA4 and RPS6KA5 is present on serine 11. The residue at position 12 (threonine 12) is a Phosphothreonine; by PKC. Residue lysine 15 is modified to N6-(2-hydroxyisobutyryl)lysine; alternate. Lysine 15 carries the N6-lactoyllysine; alternate modification. Lysine 15 is modified (N6-acetyllysine). Lysine 15 is subject to N6-glutaryllysine; alternate. Residue arginine 18 is modified to Asymmetric dimethylarginine. N6-(2-hydroxyisobutyryl)lysine; alternate occurs at positions 19, 24, 28, and 37. The residue at position 19 (lysine 19) is an N6-acetyllysine; alternate. N6-lactoyllysine; alternate is present on residues lysine 19, lysine 24, and lysine 28. N6-glutaryllysine; alternate occurs at positions 19, 24, and 28. An N6-butyryllysine; alternate mark is found at lysine 19 and lysine 24. Lysine 19 is modified (N6-methylated lysine; alternate). N6-acetyllysine is present on lysine 24. N6-acetyllysine; alternate occurs at positions 28 and 37. 2 positions are modified to N6-methylated lysine; alternate: lysine 28 and lysine 37. Position 42 is a phosphotyrosine (tyrosine 42). At lysine 57 the chain carries N6-(2-hydroxyisobutyryl)lysine; alternate. Lysine 57 is subject to N6-lactoyllysine; alternate. An N6-glutaryllysine; alternate modification is found at lysine 57. Lysine 57 is modified (N6-succinyllysine; alternate). Serine 58 carries the phosphoserine modification. N6-(2-hydroxyisobutyryl)lysine; alternate is present on residues lysine 65 and lysine 80. Residues lysine 65 and lysine 80 each carry the N6-methylated lysine modification. N6-lactoyllysine; alternate is present on lysine 80. Lysine 80 carries the post-translational modification N6-glutaryllysine; alternate. N6-succinyllysine; alternate is present on lysine 80. Threonine 81 is subject to Phosphothreonine. 2 positions are modified to N6-acetyllysine; alternate: lysine 116 and lysine 123. Residues lysine 116 and lysine 123 each carry the N6-glutaryllysine; alternate modification. Lysine 123 is subject to N6-(2-hydroxyisobutyryl)lysine; alternate. Position 123 is an N6-methylated lysine; alternate (lysine 123). Lysine 123 carries the N6-succinyllysine; alternate modification.

Belongs to the histone H3 family. As to quaternary structure, the nucleosome is a histone octamer containing two molecules each of H2A, H2B, H3 and H4 assembled in one H3-H4 heterotetramer and two H2A-H2B heterodimers. The octamer wraps approximately 147 bp of DNA. Acetylation is generally linked to gene activation. Acetylation on Lys-19 (H3K18ac) and Lys-24 (H3K24ac) favors methylation at Arg-18 (H3R17me). Acetylation at Lys-123 (H3K122ac) by EP300/p300 plays a central role in chromatin structure: localizes at the surface of the histone octamer and stimulates transcription, possibly by promoting nucleosome instability. Post-translationally, asymmetric dimethylation at Arg-18 (H3R17me2a) is linked to gene activation. Asymmetric dimethylation at Arg-3 (H3R2me2a) by PRMT6 is linked to gene repression and is mutually exclusive with H3 Lys-5 methylation (H3K4me2 and H3K4me3). H3R2me2a is present at the 3' of genes regardless of their transcription state and is enriched on inactive promoters, while it is absent on active promoters. In terms of processing, methylation at Lys-5 (H3K4me) and Lys-80 (H3K79me) are linked to gene activation. Methylation at Lys-5 (H3K4me) facilitates subsequent acetylation of H3 and H4. Methylation at Lys-80 (H3K79me) is associated with DNA double-strand break (DSB) responses and is a specific target for TP53BP1. Methylation at Lys-10 (H3K9me) and Lys-28 (H3K27me) are linked to gene repression. Methylation at Lys-10 (H3K9me) is a specific target for HP1 proteins (CBX1, CBX3 and CBX5) and prevents subsequent phosphorylation at Ser-11 (H3S10ph) and acetylation of H3 and H4. Methylation at Lys-5 (H3K4me) and Lys-80 (H3K79me) require preliminary monoubiquitination of H2B at 'Lys-120'. Phosphorylated at Thr-4 (H3T3ph) by HASPIN during prophase and dephosphorylated during anaphase. Phosphorylation at Ser-11 (H3S10ph) by aurkb is crucial for chromosome condensation and cell-cycle progression during mitosis and meiosis. In addition phosphorylation at Ser-11 (H3S10ph) by rps6ka4 and rps6ka5 is important during interphase because it enables the transcription of genes following external stimulation, like mitogens, stress, growth factors or UV irradiation and result in the activation of genes, such as c-fos and c-jun. Phosphorylation at Ser-11 (H3S10ph), which is linked to gene activation, prevents methylation at Lys-10 (H3K9me) but facilitates acetylation of H3 and H4. Phosphorylation at Ser-11 (H3S10ph) by aurkb mediates the dissociation of HP1 proteins (cbx1, cbx3 and cbx5) from heterochromatin. Phosphorylation at Ser-11 (H3S10ph) is also an essential regulatory mechanism for neoplastic cell transformation. Phosphorylation at Thr-7 (H3T6ph) by prkcb is a specific tag for epigenetic transcriptional activation that prevents demethylation of Lys-5 (H3K4me) by lsd1/kdm1a. At centromeres, specifically phosphorylated at Thr-12 (H3T11ph) from prophase to early anaphase, by DAPK3 and PKN1. Phosphorylation at Thr-12 (H3T11ph) by PKN1 or isoform M2 of PKM (PKM2) is a specific tag for epigenetic transcriptional activation that promotes demethylation of Lys-10 (H3K9me) by kdm4c/jmjd2c. Phosphorylation at Tyr-42 (H3Y41ph) by jak2 promotes exclusion of cbx5 (HP1 alpha) from chromatin. Post-translationally, lysine deamination at Lys-5 (H3K4all) to form allysine only takes place on H3K4me3 and results in gene repression. In terms of processing, butyrylation of histones marks active promoters and competes with histone acetylation. It is present during late spermatogenesis. Succinylation at Lys-80 (H3K79succ) by KAT2A takes place with a maximum frequency around the transcription start sites of genes. It gives a specific tag for epigenetic transcription activation. Desuccinylation at Lys-123 (H3K122succ) by SIRT7 in response to DNA damage promotes chromatin condensation and double-strand breaks (DSBs) repair. Post-translationally, serine ADP-ribosylation constitutes the primary form of ADP-ribosylation of proteins in response to DNA damage. Serine ADP-ribosylation at Ser-11 (H3S10ADPr) is mutually exclusive with phosphorylation at Ser-11 (H3S10ph) and impairs acetylation at Lys-10 (H3K9ac).

The protein resides in the nucleus. The protein localises to the chromosome. Core component of nucleosome. Nucleosomes wrap and compact DNA into chromatin, limiting DNA accessibility to the cellular machineries which require DNA as a template. Histones thereby play a central role in transcription regulation, DNA repair, DNA replication and chromosomal stability. DNA accessibility is regulated via a complex set of post-translational modifications of histones, also called histone code, and nucleosome remodeling. This Xenopus laevis (African clawed frog) protein is Histone H3.3C (h3-5).